The following is a 221-amino-acid chain: Toll/interleukin-1 receptor domain-containing adapter protein (221 aa).

The segment at 1 to 82 is disordered; it reads MASSTSLPAP…HASDSGSSRW (82 aa). Residues 48 to 67 show a composition bias toward low complexity; that stretch reads SQPTSQDSPLPPSLSSVTSP. The TIR domain occupies 84 to 213; it reads KDYDVCVCHS…GGFRQVKEAV (130 aa). 2 cysteine pairs are disulfide-bonded: cysteine 89–cysteine 134 and cysteine 142–cysteine 174.

In terms of assembly, homodimer. Also forms heterodimers with MYD88. May interact with PIK3AP1. Interacts with TLR4 and IRAK2 via their respective TIR domains. Interacts with BMX and TBK1. Interacts with EIF2AK2. Does not interact with IRAK1, nor TLR9. Interacts with TLR2. Interacts with RAGE/AGER. As to quaternary structure, (Microbial infection) In case of infection, interacts with B.melitensis protein TcpB (AC Q8YF53); TcpB abolishes the TLR4-TIRAP interaction and downstream signaling. Post-translationally, phosphorylated by IRAK1 and IRAK4. Also phosphorylated by BTK. Polyubiquitinated. Polyubiquitination follows phosphorylation by BTK and leads to TIRAP degradation. Highly expressed in liver, kidney, spleen, skeletal muscle and heart. Also detected in peripheral blood leukocytes, lung, placenta, small intestine, thymus, colon and brain.

The protein localises to the cytoplasm. It is found in the cell membrane. The protein resides in the membrane. In terms of biological role, adapter involved in TLR2, TLR4 and RAGE signaling pathways in the innate immune response. Acts via IRAK2 and TRAF-6, leading to the activation of NF-kappa-B, MAPK1, MAPK3 and JNK, and resulting in cytokine secretion and the inflammatory response. Positively regulates the production of TNF-alpha (TNF) and interleukin-6 (IL6). In Homo sapiens (Human), this protein is Toll/interleukin-1 receptor domain-containing adapter protein (TIRAP).